Consider the following 188-residue polypeptide: Ribose 1,5-bisphosphate phosphokinase PhnN (188 aa).

This sequence belongs to the ribose 1,5-bisphosphokinase family.

The catalysed reaction is alpha-D-ribose 1,5-bisphosphate + ATP = 5-phospho-alpha-D-ribose 1-diphosphate + ADP. It functions in the pathway metabolic intermediate biosynthesis; 5-phospho-alpha-D-ribose 1-diphosphate biosynthesis; 5-phospho-alpha-D-ribose 1-diphosphate from D-ribose 5-phosphate (route II): step 3/3. Catalyzes the phosphorylation of ribose 1,5-bisphosphate to 5-phospho-D-ribosyl alpha-1-diphosphate (PRPP). This Dickeya zeae (strain Ech586) (Dickeya dadantii (strain Ech586)) protein is Ribose 1,5-bisphosphate phosphokinase PhnN.